The chain runs to 481 residues: Polygalacturonase QRT3 (481 aa).

Residues 1-27 (MELRKSQVAMPVFLAIMSLMVSQVVFA) form the signal peptide. PbH1 repeat units lie at residues 203–226 (SLRT…LVKS), 261–282 (GNDN…MVSG), and 356–377 (IRGV…QIVQ). N-linked (GlcNAc...) asparagine glycosylation is found at Asn415 and Asn455.

It belongs to the glycosyl hydrolase 28 family. As to expression, expressed in the tapetum cells in the anthers and in the ovules of open flowers.

The protein resides in the secreted. It localises to the cell wall. It carries out the reaction (1,4-alpha-D-galacturonosyl)n+m + H2O = (1,4-alpha-D-galacturonosyl)n + (1,4-alpha-D-galacturonosyl)m.. Functionally, polygalacturonase required for degrading the pollen mother cell wall during microspore development. In Arabidopsis thaliana (Mouse-ear cress), this protein is Polygalacturonase QRT3 (QRT3).